Here is a 343-residue protein sequence, read N- to C-terminus: MRN complex-interacting protein (343 aa).

Positions 75-104 are disordered; sequence EETVSASEEENVGHQQAGNVKQQEKSQPSE. Residues 87–104 are compositionally biased toward polar residues; the sequence is GHQQAGNVKQQEKSQPSE. Phosphoserine occurs at positions 100 and 115. Disordered regions lie at residues 128-178, 193-212, and 230-324; these read SKQP…WGPQ, SPCLQENSADCSAGELRGPG, and AQFV…AQNP. A Nuclear localization signal (NLS) motif is present at residues 148-151; the sequence is RKRK. Polar residues predominate over residues 193 to 202; it reads SPCLQENSAD. A necessary for the association with the MRN complex region spans residues 213–237; that stretch reads KELWSPIQQVTATSSKWAQFVLPPR. Residues 240-255 are compositionally biased toward basic and acidic residues; it reads SHVDSEQPRSLQRDPR.

The protein belongs to the MRNIP family. As to quaternary structure, associates with the MRE11-RAD50-NBN (MRN) damage-sensing complex; this association is constitutive. Interacts with MRE11. Interacts with NBN. Interacts with RAD50. Phosphorylated; phosphorylation is constitutive and occurs in the absence of any DNA-damaging stimulus. Phosphorylation on Ser-115 is necessary for its nuclear retention.

It is found in the nucleus. The protein resides in the nucleoplasm. In terms of biological role, plays a role in the cellular response to DNA damage and the maintenance of genome stability through its association with the MRN damage-sensing complex. Promotes chromatin loading and activity of the MRN complex to facilitate subsequent ATM-mediated DNA damage response signaling and DNA repair. The protein is MRN complex-interacting protein of Homo sapiens (Human).